The sequence spans 1136 residues: Unconventional myosin-Ib (1136 aa).

Residues 15–701 enclose the Myosin motor domain; sequence IGVGDMVLLE…TLFKLEDLRK (687 aa). The residue at position 60 (S60) is a Phosphoserine. ATP is bound at residue 108 to 115; that stretch reads GESGAGKT. K287 participates in a covalent cross-link: Glycyl lysine isopeptide (Lys-Gly) (interchain with G-Cter in SUMO1); alternate. Residue K287 forms a Glycyl lysine isopeptide (Lys-Gly) (interchain with G-Cter in SUMO2); alternate linkage. Residues 578–600 form an actin-binding region; the sequence is VATLMKNLQTKNPNYIRCIKPND. 6 IQ domains span residues 704-733, 728-748, 750-779, 779-808, 808-837, and 837-866; these read LEDL…SQIV, KKSQ…KRYQ, TKSS…QKRC, CKEA…EARN, NKHA…EARR, and RKHA…ANAG. One can recognise a TH1 domain in the interval 952–1136; sequence KALYPSSVGQ…NNRLLEVAVP (185 aa).

Belongs to the TRAFAC class myosin-kinesin ATPase superfamily. Myosin family.

Its function is as follows. Motor protein that may participate in process critical to neuronal development and function such as cell migration, neurite outgrowth and vesicular transport. This chain is Unconventional myosin-Ib (MYO1B), found in Homo sapiens (Human).